The chain runs to 247 residues: Ribose-5-phosphate isomerase (247 aa).

Belongs to the ribose 5-phosphate isomerase family.

It is found in the cytoplasm. It catalyses the reaction aldehydo-D-ribose 5-phosphate = D-ribulose 5-phosphate. The protein operates within carbohydrate degradation; pentose phosphate pathway; D-ribose 5-phosphate from D-ribulose 5-phosphate (non-oxidative stage): step 1/1. This chain is Ribose-5-phosphate isomerase (RKI1), found in Meyerozyma guilliermondii (strain ATCC 6260 / CBS 566 / DSM 6381 / JCM 1539 / NBRC 10279 / NRRL Y-324) (Yeast).